Consider the following 111-residue polypeptide: MSYPVSAQPQGVQGYMSSNSSQWNSDVFDCCEDMGTCLCGTFVPCILACKVSKDYGECCCLPCLFGSVLAVRTGIRERYHIEGSICNDWVCLSFCAPCTLCQMARELKARN.

This sequence belongs to the cornifelin family.

The chain is Cornifelin homolog B (cnfn-b) from Xenopus laevis (African clawed frog).